A 76-amino-acid chain; its full sequence is Serine proteinase inhibitor IA-1 (76 aa).

An N-acetylserine modification is found at Ser1.

This sequence belongs to the protease inhibitor I9 family.

Functionally, specifically inhibits an endogenous intracellular serine proteinase (proteinase A). This Pleurotus ostreatus (Oyster mushroom) protein is Serine proteinase inhibitor IA-1.